The chain runs to 208 residues: Protein-L-isoaspartate O-methyltransferase (208 aa).

Ser-59 is a catalytic residue.

This sequence belongs to the methyltransferase superfamily. L-isoaspartyl/D-aspartyl protein methyltransferase family.

It is found in the cytoplasm. The catalysed reaction is [protein]-L-isoaspartate + S-adenosyl-L-methionine = [protein]-L-isoaspartate alpha-methyl ester + S-adenosyl-L-homocysteine. Its function is as follows. Catalyzes the methyl esterification of L-isoaspartyl residues in peptides and proteins that result from spontaneous decomposition of normal L-aspartyl and L-asparaginyl residues. It plays a role in the repair and/or degradation of damaged proteins. This chain is Protein-L-isoaspartate O-methyltransferase, found in Escherichia coli (strain K12 / MC4100 / BW2952).